Consider the following 389-residue polypeptide: MKTFILLAVLGLASASVHQHKIVWRESKKMGMIRTGQYPAYLEYQRNLRAVSPNVLANLPQNVNDFGDFEYLGNITIGTPDQGFIVVLDTGSSNLWIPGPTCKTNCKTKSKFDSTASSTFVKNGKSWTIQYGSGDAAGILGQDTVRFGAKGDSQLSVPTTTFGIASKISADFKNDATDGILGLAFTSLAVDGVVPPLINAINQGILDQPLFSVWLEHRGAANNVGGGVFTYGAIDTTNCGALVAYQPLSSATYYQFKAAGFKLGSYSNTKTVDVISDTGTSFLGGPQSVVDGLAKAAGATYDDFNEVYFIDCAAQPGTLDITIGTNTYSIQPVNYIVDAGNGQCLFAAFPFDFGGFGPSWILGDPFIRQYCNIYDIGNKRMGFAPSLQK.

The N-terminal stretch at M1–A15 is a signal peptide. The region spanning Y71 to A384 is the Peptidase A1 domain. N-linked (GlcNAc...) asparagine glycosylation occurs at N74. Residue D89 is part of the active site. C102 and C106 are disulfide-bonded. The active site involves D277. C312 and C344 are oxidised to a cystine.

This sequence belongs to the peptidase A1 family. Post-translationally, glycosylated. Has phosphorylcholine-substituted oligosaccharide N-glycans. In terms of tissue distribution, expressed in intestine, muscles, pharynx and hypodermis.

Its subcellular location is the secreted. Aspartic protease. The chain is Aspartic protease 6 from Caenorhabditis elegans.